A 231-amino-acid polypeptide reads, in one-letter code: DNA repair protein RecO (231 aa).

Belongs to the RecO family.

Involved in DNA repair and RecF pathway recombination. This chain is DNA repair protein RecO, found in Coxiella burnetii (strain CbuK_Q154) (Coxiella burnetii (strain Q154)).